The sequence spans 272 residues: MHLLLVQLLVLLPLGKADLCVDGCQSQGSLSFPLLERGRRDLHVANHEEAEDKPDLFVAVPHLMGTSLAGEGQRQRGKMLSRLGRFWKKPETEFYPPRDVESDHVSSGMQAVTQPADGRKVERSPLQEEAKRFWHRFMFRKGPAFQGVILPIKSHEVHWETCRTVPFNQTIAHEDCQKVVVQNNLCFGKCSSIRFPGEGADAHSFCSHCSPTKFTTVHLMLNCTSPTPVVKMVMQVEECQCMVKTERGEERLLLAGSQGSFIPGLPASKTNP.

The signal sequence occupies residues 1 to 17; sequence MHLLLVQLLVLLPLGKA. 4 disulfides stabilise this stretch: Cys-162-Cys-209, Cys-176-Cys-223, Cys-186-Cys-239, and Cys-190-Cys-241. Residues 162 to 246 enclose the CTCK domain; it reads CRTVPFNQTI…EECQCMVKTE (85 aa). N-linked (GlcNAc...) asparagine glycans are attached at residues Asn-168 and Asn-222.

Belongs to the DAN family. Forms monomers and predominantly dimers. In terms of processing, N-glycosylated.

The protein localises to the secreted. Functionally, cytokine that may play a role in anterior neural induction and somite formation during embryogenesis in part, through a BMP-inhibitory mechanism. Can regulate Nodal signaling during gastrulation as well as the formation and patterning of the primitive streak. The sequence is that of Cerberus (Cer1) from Mus musculus (Mouse).